A 258-amino-acid polypeptide reads, in one-letter code: Enterotoxin type D (258 aa).

An N-terminal signal peptide occupies residues 1-25 (MKKFNILIALLFFTSLVISPLNVKA). Residues D212, H248, H250, and D252 each coordinate Zn(2+).

It belongs to the staphylococcal/streptococcal toxin family. In terms of assembly, homodimer; zinc-dependent. Interacts with MHC class II molecules composed of alpha/HLA-DRA and beta/HLA-DRB1 chains. It depends on Zn(2+) as a cofactor.

The protein localises to the secreted. Staphylococcal enterotoxin that activates the host immune system by binding as unprocessed molecules to major histocompatibility (MHC) complex class II and T-cell receptor (TCR) molecules. In turn, this ternary complex activates a large number of T-lymphocytes initiating a systemic release of pro-inflammatory cytokines. In addition, induces B-cell proliferation and differentiation in the presence of T-cells. Causes also the intoxication staphylococcal food poisoning syndrome. The sequence is that of Enterotoxin type D (entD) from Staphylococcus aureus.